Here is a 682-residue protein sequence, read N- to C-terminus: Transcription factor 12 (682 aa).

Residues 19–27 (DLLDFSAMF) carry the 9aaTAD motif. 3 disordered regions span residues 25-122 (AMFS…LYSR), 140-219 (LGSP…PPTS), and 281-313 (SVSP…ASHT). 2 stretches are compositionally biased toward polar residues: residues 30–48 (PVNS…QFSG) and 56–76 (GTTS…SRGF). Residues Ser-47, Ser-67, and Ser-79 each carry the phosphoserine modification. A compositionally biased stretch (basic and acidic residues) spans 81-93 (HYSDHLNDSRLGA). At Ser-98 the chain carries Phosphoserine. 2 stretches are compositionally biased toward polar residues: residues 101-121 (PFMN…SLYS) and 144-163 (AQLS…SATS). A Glycyl lysine isopeptide (Lys-Gly) (interchain with G-Cter in SUMO2) cross-link involves residue Lys-110. Ser-116 is modified (phosphoserine). Residues 119–140 (LYSRDTGLPGCQSSLLRQDLGL) form a leucine-zipper region. Lys-181 participates in a covalent cross-link: Glycyl lysine isopeptide (Lys-Gly) (interchain with G-Cter in SUMO2). Residues 182-196 (KVRKVPPGLPSSVYA) form an interaction with RUNX1T1 region. Residues 282-306 (VSPTDINTSLPPMSSFHRGSTSSSP) are compositionally biased toward polar residues. Thr-313 bears the Phosphothreonine mark. Ser-333 bears the Phosphoserine mark. Disordered regions lie at residues 349–395 (PDHT…SLHS) and 462–580 (SASM…ERRM). Residues 352 to 363 (TSSSFPSNPSTP) show a composition bias toward low complexity. Composition is skewed to polar residues over residues 364–376 (VGSP…TSQW) and 383–395 (APSS…SLHS). Over residues 481–492 (SVLSSTVTTSST) the composition is skewed to low complexity. Positions 506–517 (LQSQSGTVVTTE) are enriched in polar residues. Basic and acidic residues-rich tracts occupy residues 518-530 (IKTE…ENLH) and 536-551 (DDMK…DIKV). Lys-519 participates in a covalent cross-link: Glycyl lysine isopeptide (Lys-Gly) (interchain with G-Cter in SUMO2). Ser-540 carries the phosphoserine modification. Residue Lys-550 forms a Glycyl lysine isopeptide (Lys-Gly) (interchain with G-Cter in SUMO2) linkage. Thr-557 carries the phosphothreonine modification. Ser-558 and Ser-559 each carry phosphoserine. Basic and acidic residues predominate over residues 568–580 (PEQKIEREKERRM). The region spanning 577–630 (ERRMANNARERLRVRDINEAFKELGRMCQLHLKSEKPQTKLLILHQAVAVILSL) is the bHLH domain. Glycyl lysine isopeptide (Lys-Gly) (interchain with G-Cter in SUMO2) cross-links involve residues Lys-609 and Lys-653. The interval 632 to 655 (QQVRERNLNPKAACLKRREEEKVS) is class A specific domain. The tract at residues 651-682 (EEKVSAVSAEPPTTLPGTHPGLSETTNPMGHM) is disordered. A compositionally biased stretch (low complexity) spans 661 to 672 (PPTTLPGTHPGL). Residues 673 to 682 (SETTNPMGHM) show a composition bias toward polar residues.

As to quaternary structure, efficient DNA binding requires dimerization with another bHLH protein. Forms homo- or heterooligomers with myogenin, E12 and ITF2 proteins. Interacts with PTF1A. Interacts with NEUROD2. Interacts with RUNX1T1. Interacts with AML1-MTG8/ETO (via nervy homology region 2 in oligomerized form). Interacts with BHLHA9. In terms of tissue distribution, expressed in several tissues and cell types including skeletal muscle, thymus, and a B-cell line.

It localises to the nucleus. In terms of biological role, transcriptional regulator. Involved in the initiation of neuronal differentiation. Activates transcription by binding to the E box (5'-CANNTG-3'). May be involved in the functional network that regulates the development of the GnRH axis. The sequence is that of Transcription factor 12 (TCF12) from Homo sapiens (Human).